A 271-amino-acid chain; its full sequence is ATP synthase subunit a (271 aa).

5 helical membrane-spanning segments follow: residues 38 to 58 (FWTL…LFLV), 100 to 120 (LIAP…LMDL), 146 to 166 (DVNI…FYSI), 220 to 240 (LIFI…LNVP), and 242 to 262 (AIFH…LTIV).

This sequence belongs to the ATPase A chain family. F-type ATPases have 2 components, CF(1) - the catalytic core - and CF(0) - the membrane proton channel. CF(1) has five subunits: alpha(3), beta(3), gamma(1), delta(1), epsilon(1). CF(0) has three main subunits: a(1), b(2) and c(9-12). The alpha and beta chains form an alternating ring which encloses part of the gamma chain. CF(1) is attached to CF(0) by a central stalk formed by the gamma and epsilon chains, while a peripheral stalk is formed by the delta and b chains.

The protein localises to the cell inner membrane. Functionally, key component of the proton channel; it plays a direct role in the translocation of protons across the membrane. This chain is ATP synthase subunit a, found in Salmonella choleraesuis (strain SC-B67).